We begin with the raw amino-acid sequence, 68 residues long: MKNQLNFNIVSDEELAEVNGGSLQYVMSAGPYTWYKDTRTGKTICKQTIDTASYTFGVMAEGWGKTFH.

The propeptide occupies 1 to 21 (MKNQLNFNIVSDEELAEVNGG).

Its subcellular location is the secreted. Its function is as follows. Kills Lactococci by dissipating the membrane potential of the cells. The protein is Bacteriocin lactococcin-B (lcnB) of Lactococcus lactis subsp. cremoris (Streptococcus cremoris).